A 62-amino-acid chain; its full sequence is MGMRMMFTVFLLVVLATTVVSFTSDRASDGRNAAANAFDLIALIARQNCCSIPSCWEKYKCS.

Positions 1-21 (MGMRMMFTVFLLVVLATTVVS) are cleaved as a signal peptide. A propeptide spanning residues 22–46 (FTSDRASDGRNAAANAFDLIALIAR) is cleaved from the precursor. Position 47 is a pyrrolidone carboxylic acid (Gln47). 2 disulfide bridges follow: Cys49–Cys55 and Cys50–Cys61.

It belongs to the conotoxin A superfamily. As to expression, expressed by the venom duct.

The protein resides in the secreted. In terms of biological role, alpha-conotoxins act on postsynaptic membranes, they bind to the nicotinic acetylcholine receptors (nAChR) and thus inhibit them. This Conus caracteristicus (Characteristic cone) protein is Alpha-conotoxin-like Ca1.1.